The chain runs to 1100 residues: QYDGVKAPDPGPGPMGMMGARGPPGPPGPPGAQGHTGHPGEPGEPGQTGPLGPRGPPGPPGKSGEDGNNGRPGKPGDRGAPGPQGARGFPGTPGLPGMKGHRGYTGLDGRKGEPGGAGAKGEPGAHGAAGSPGLAGSRGRAGPAGPAGARGADGNAGPAGPAGPLGAAGPPGFPGGPGPKGELGPAGATGPSGAQGSRGEPGPNGAVGPVGPPGNPGNNGLNGAKGAAGTPGVAGAPGFPGPRGGPGPQGPQGAAGQRGLAGDPGTQGVKGDGGPKGEPGNSGPQGPPGPQGEEGKRGPTGELGATGPAGNRGARPGSRGMPGSEGRTGPLGMPGARGASGAAGPRGPPGDAGRAGESGPAGLRGLPGSPGSSGPPGKEGAAGPAGQDGRGGPPGPTGPRGQPGNLGFPGPKGPSGEAGKPGDKGATGPTGLRGAPGPDGNNGATGATGPAGGPGEKGEQGASGAPGFQGLPGPAGGAGEAGKPGDRGLPGDQGVSGPAGAKGERGNPGAAGASGPQGPLGPRGPAGAPGTDGGKGEPGAAGAAGGPGHQGPGGMPGERGAAGPPGGKGEKGEGGHRGPDGNAGRDGSRGMPGPAGPPGPTGANGDKGESGAFGPAGPAGVRGASGERGEVGPAGAPGFAGPPGADGQTGARGERGPSGGKGESGPSGPAGPAGQSGPPGASGPAGPTGARGDNGPPGLTGFPGAAGRVGAAGPAGLVGPPGAAGPAGKDGPRGLRGDPGPSGPSGDQGMVGPPGPSGEKGXPGTPGTSGPLGLQGFVGLPGARGDRGSPGGAGAVGEAGRVGPAGPAGARGAPGNLGLPGMTGPQGEAGREGNPGNDGPPGRPGAPGFKGDRAGPTGAAGRPGNRGESGPGGAAGAVGPAGARGAAGPSGPRGEKGVAGEKGERGMKGLRGHAGLQGMPGPSGPSGDTGSAGPNGPAGPRGPAGPHGPPGKDGRAGGHGTLGSPGARLPGPPGPAGGGYDVSGYDEYRAAKDYEVDATIKSLNTQLENLLTPEGSRKNPARLSHPEWSSGFYVFCDFNTRETCLHAHPGSLARAEGNSRFTFSVLEDGCTRLPLLDLAPLDLGGADQEFGLDLGPVCFK.

The segment at 1 to 982 (QYDGVKAPDP…PGPAGGGYDV (982 aa)) is disordered. Low complexity-rich tracts occupy residues 122–170 (EPGA…AAGP), 200–209 (EPGPNGAVGP), and 216–237 (PGNN…AGAP). Positions 239–249 (FPGPRGGPGPQ) are enriched in pro residues. The segment covering 251–261 (PQGAAGQRGLA) has biased composition (low complexity). Residues 268–277 (GVKGDGGPKG) show a composition bias toward gly residues. Composition is skewed to low complexity over residues 333–352 (MPGA…PGDA), 358–385 (SGPA…AGPA), 435–448 (APGP…TGAT), and 460–472 (QGAS…QGLP). Gly residues predominate over residues 473–482 (GPAGGAGEAG). A compositionally biased stretch (low complexity) spans 507 to 517 (NPGAAGASGPQ). A compositionally biased stretch (gly residues) spans 530-557 (GTDGGKGEPGAAGAAGGPGHQGPGGMPG). The segment covering 568 to 579 (KGEKGEGGHRGP) has biased composition (basic and acidic residues). The span at 633–646 (PAGAPGFAGPPGAD) shows a compositional bias: low complexity. Gly residues predominate over residues 656–665 (GPSGGKGESG). Low complexity-rich tracts occupy residues 666–691 (PSGP…TGAR), 702–729 (FPGA…PAGK), and 757–775 (SGEK…LGLQ). A compositionally biased stretch (gly residues) spans 788–797 (GSPGGAGAVG). 2 stretches are compositionally biased toward low complexity: residues 798-820 (EAGR…LGLP) and 854-866 (AGPT…PGNR). The span at 867–876 (GESGPGGAAG) shows a compositional bias: gly residues. Low complexity predominate over residues 877-892 (AVGPAGARGAAGPSGP). Residues 893–907 (RGEKGVAGEKGERGM) show a composition bias toward basic and acidic residues. Over residues 916 to 935 (LQGMPGPSGPSGDTGSAGPN) the composition is skewed to low complexity. The region spanning 1071–1100 (TRLPLLDLAPLDLGGADQEFGLDLGPVCFK) is the Fibrillar collagen NC1 domain.

This sequence belongs to the fibrillar collagen family.

The protein resides in the secreted. Its subcellular location is the extracellular space. It localises to the extracellular matrix. In Epinephelus caninus (Dogtooth grouper), this protein is Collagen alpha-2(I) chain.